The chain runs to 36 residues: Photosystem I reaction center subunit VIII (36 aa).

Residues 7-29 traverse the membrane as a helical segment; that stretch reads PSILVPLVGIIFPGISMALLFIY.

The protein belongs to the PsaI family.

The protein resides in the plastid. It is found in the chloroplast thylakoid membrane. Functionally, may help in the organization of the PsaL subunit. In Gracilaria tenuistipitata var. liui (Red alga), this protein is Photosystem I reaction center subunit VIII.